We begin with the raw amino-acid sequence, 959 residues long: Isoleucine--tRNA ligase (959 aa).

Positions 66–76 (PYANGDIHIGH) match the 'HIGH' region motif. Position 592 (Glu592) interacts with L-isoleucyl-5'-AMP. A 'KMSKS' region motif is present at residues 633 to 637 (KMSKS). Residue Lys636 participates in ATP binding. Zn(2+)-binding residues include Cys922, Cys925, Cys942, and Cys945.

This sequence belongs to the class-I aminoacyl-tRNA synthetase family. IleS type 1 subfamily. As to quaternary structure, monomer. It depends on Zn(2+) as a cofactor.

Its subcellular location is the cytoplasm. The catalysed reaction is tRNA(Ile) + L-isoleucine + ATP = L-isoleucyl-tRNA(Ile) + AMP + diphosphate. Catalyzes the attachment of isoleucine to tRNA(Ile). As IleRS can inadvertently accommodate and process structurally similar amino acids such as valine, to avoid such errors it has two additional distinct tRNA(Ile)-dependent editing activities. One activity is designated as 'pretransfer' editing and involves the hydrolysis of activated Val-AMP. The other activity is designated 'posttransfer' editing and involves deacylation of mischarged Val-tRNA(Ile). The sequence is that of Isoleucine--tRNA ligase from Cupriavidus metallidurans (strain ATCC 43123 / DSM 2839 / NBRC 102507 / CH34) (Ralstonia metallidurans).